Consider the following 316-residue polypeptide: Ribosomal RNA small subunit methyltransferase H (316 aa).

Residues 35-37 (GGH), Asp-55, Phe-79, Asp-101, and Gln-108 contribute to the S-adenosyl-L-methionine site. The segment at 291–316 (AIKPSKDEVDENTRSRSSVLRIAEKL) is disordered. A compositionally biased stretch (basic and acidic residues) spans 294 to 304 (PSKDEVDENTR).

Belongs to the methyltransferase superfamily. RsmH family.

It is found in the cytoplasm. The catalysed reaction is cytidine(1402) in 16S rRNA + S-adenosyl-L-methionine = N(4)-methylcytidine(1402) in 16S rRNA + S-adenosyl-L-homocysteine + H(+). Specifically methylates the N4 position of cytidine in position 1402 (C1402) of 16S rRNA. The protein is Ribosomal RNA small subunit methyltransferase H of Vibrio atlanticus (strain LGP32) (Vibrio splendidus (strain Mel32)).